We begin with the raw amino-acid sequence, 112 residues long: Nitrogen regulatory protein P-II (112 aa).

An O-UMP-tyrosine modification is found at tyrosine 51.

The protein belongs to the P(II) protein family. Homotrimer.

Functionally, in nitrogen-limiting conditions, when the ratio of Gln to 2-ketoglutarate decreases, P-II is uridylylated to P-II-UMP. P-II-UMP allows the deadenylation of glutamine synthetase (GS), thus activating the enzyme. Conversely, in nitrogen excess P-II is deuridylated and promotes the adenylation of GS. P-II indirectly controls the transcription of the GS gene (glnA). P-II prevents NR-II-catalyzed conversion of NR-I to NR-I-phosphate, the transcriptional activator of glnA. When P-II is uridylylated to P-II-UMP, these events are reversed. The chain is Nitrogen regulatory protein P-II (glnB) from Bradyrhizobium diazoefficiens (strain JCM 10833 / BCRC 13528 / IAM 13628 / NBRC 14792 / USDA 110).